The following is a 307-amino-acid chain: Putative ankyrin repeat protein L59 (307 aa).

9 ANK repeats span residues 41 to 67 (LFNK…NLEK), 68 to 97 (IDNK…DTTN), 98 to 127 (HNYS…DIRA), 129 to 157 (DDEA…DVRN), 158 to 187 (RNDF…DIRT), 188 to 217 (DDDY…NIHA), 219 to 247 (GDSA…DIRI), 248 to 277 (DNDY…DIGA), and 279 to 307 (NNYA…LKLY).

This is Putative ankyrin repeat protein L59 from Acanthamoeba polyphaga (Amoeba).